A 338-amino-acid polypeptide reads, in one-letter code: Limbic system-associated membrane protein (338 aa).

A signal peptide spans 1 to 28 (MVARAQPDRKQLPLVLLRLLCLLPTGLP). Ig-like C2-type domains lie at 29–122 (VRSV…PKTS), 132–214 (PKIS…VRVT), and 219–306 (PTIT…LYLY). N-linked (GlcNAc...) asparagine glycans are attached at residues N40, N66, N136, and N148. C53 and C111 form a disulfide bridge. 2 cysteine pairs are disulfide-bonded: C153-C197 and C239-C290. N-linked (GlcNAc...) asparagine glycosylation is found at N279, N287, N300, and N315. The GPI-anchor amidated asparagine moiety is linked to residue N315. Positions 316–338 (GSVSLAVPLWLLAASLLCLLSKC) are cleaved as a propeptide — removed in mature form.

It belongs to the immunoglobulin superfamily. IgLON family.

It is found in the cell membrane. Mediates selective neuronal growth and axon targeting. Probably serves as a recognition molecule for the formation of limbic connections. The chain is Limbic system-associated membrane protein from Gallus gallus (Chicken).